Consider the following 679-residue polypeptide: NADPH--cytochrome P450 reductase (679 aa).

The Lumenal segment spans residues 1–21 (MASEQTIDGAAAIPSGGGDEP). The helical transmembrane segment at 22-42 (FLGLLDVALLAVLIGGAAFYF) threads the bilayer. The Cytoplasmic portion of the chain corresponds to 43–679 (LRSRKKEEEP…QKRYSADVWS (637 aa)). Residues 84-228 (LVVFYGSQTG…DFITWKDRFW (145 aa)) form the Flavodoxin-like domain. FMN-binding positions include 90–95 (SQTGTG), 142–145 (ATYG), 177–186 (LGNKTYEHYN), and D212. One can recognise an FAD-binding FR-type domain in the interval 283-523 (KNPFLAPIKV…FIRKSQFRLP (241 aa)). Residue R302 participates in NADP(+) binding. Residues 458–461 (RYYS), 476–478 (TAV), Y482, and 492–495 (GVAT) each bind FAD. Residues T537, 597-598 (SR), 603-607 (KVYVQ), and D640 each bind NADP(+). Residue W678 participates in FAD binding.

This sequence belongs to the NADPH--cytochrome P450 reductase family. It in the N-terminal section; belongs to the flavodoxin family. The protein in the C-terminal section; belongs to the flavoprotein pyridine nucleotide cytochrome reductase family. In terms of assembly, interacts with sturkopf. It depends on FAD as a cofactor. FMN is required as a cofactor. In terms of tissue distribution, high in antennae.

Its subcellular location is the endoplasmic reticulum membrane. It carries out the reaction 2 oxidized [cytochrome P450] + NADPH = 2 reduced [cytochrome P450] + NADP(+) + H(+). Its function is as follows. This enzyme is required for electron transfer from NADP to cytochrome p450 in microsomes. It can also provide electron transfer to heme oxygenase and cytochrome b5. May function to clear the olfactory organ (antennae) from accumulating chemicals. The polypeptide is NADPH--cytochrome P450 reductase (Cpr) (Drosophila melanogaster (Fruit fly)).